A 228-amino-acid chain; its full sequence is DNA mismatch repair protein MutH (228 aa).

The protein belongs to the MutH family.

Its subcellular location is the cytoplasm. Functionally, sequence-specific endonuclease that cleaves unmethylated GATC sequences. It is involved in DNA mismatch repair. The polypeptide is DNA mismatch repair protein MutH (Yersinia pseudotuberculosis serotype O:1b (strain IP 31758)).